We begin with the raw amino-acid sequence, 360 residues long: 3-dehydroquinate synthase (360 aa).

NAD(+) is bound by residues 71 to 76, 105 to 109, 129 to 130, K142, K151, and 169 to 172; these read DGEQYK, GVVGD, TT, and TLNT. Zn(2+) is bound by residues E184, H248, and H265.

Belongs to the sugar phosphate cyclases superfamily. Dehydroquinate synthase family. It depends on Co(2+) as a cofactor. Requires Zn(2+) as cofactor. NAD(+) serves as cofactor.

It localises to the cytoplasm. It catalyses the reaction 7-phospho-2-dehydro-3-deoxy-D-arabino-heptonate = 3-dehydroquinate + phosphate. The protein operates within metabolic intermediate biosynthesis; chorismate biosynthesis; chorismate from D-erythrose 4-phosphate and phosphoenolpyruvate: step 2/7. Functionally, catalyzes the conversion of 3-deoxy-D-arabino-heptulosonate 7-phosphate (DAHP) to dehydroquinate (DHQ). The sequence is that of 3-dehydroquinate synthase from Coxiella burnetii (strain CbuK_Q154) (Coxiella burnetii (strain Q154)).